We begin with the raw amino-acid sequence, 512 residues long: Glycerol kinase 1 (512 aa).

Position 18 (threonine 18) interacts with ADP. The ATP site is built by threonine 18, threonine 19, and serine 20. Threonine 18 provides a ligand contact to sn-glycerol 3-phosphate. Arginine 22 lines the ADP pocket. Residues arginine 88, glutamate 89, tyrosine 140, and aspartate 255 each contribute to the sn-glycerol 3-phosphate site. 5 residues coordinate glycerol: arginine 88, glutamate 89, tyrosine 140, aspartate 255, and glutamine 256. ADP is bound by residues threonine 277 and glycine 321. 4 residues coordinate ATP: threonine 277, glycine 321, glutamine 325, and glycine 422. Residues glycine 422 and asparagine 426 each coordinate ADP.

It belongs to the FGGY kinase family.

It carries out the reaction glycerol + ATP = sn-glycerol 3-phosphate + ADP + H(+). The protein operates within polyol metabolism; glycerol degradation via glycerol kinase pathway; sn-glycerol 3-phosphate from glycerol: step 1/1. Its activity is regulated as follows. Inhibited by fructose 1,6-bisphosphate (FBP). In terms of biological role, key enzyme in the regulation of glycerol uptake and metabolism. Catalyzes the phosphorylation of glycerol to yield sn-glycerol 3-phosphate. The protein is Glycerol kinase 1 of Streptomyces avermitilis (strain ATCC 31267 / DSM 46492 / JCM 5070 / NBRC 14893 / NCIMB 12804 / NRRL 8165 / MA-4680).